We begin with the raw amino-acid sequence, 278 residues long: Pantothenate synthetase (278 aa).

An ATP-binding site is contributed by 28 to 35 (MGNLHAGH). Residue His35 is the Proton donor of the active site. Residue Gln59 coordinates (R)-pantoate. Gln59 is a binding site for beta-alanine. Residue 145–148 (GKKD) participates in ATP binding. Gln151 serves as a coordination point for (R)-pantoate. 182 to 185 (LSSR) lines the ATP pocket.

This sequence belongs to the pantothenate synthetase family. Homodimer.

The protein localises to the cytoplasm. The enzyme catalyses (R)-pantoate + beta-alanine + ATP = (R)-pantothenate + AMP + diphosphate + H(+). It participates in cofactor biosynthesis; (R)-pantothenate biosynthesis; (R)-pantothenate from (R)-pantoate and beta-alanine: step 1/1. Its function is as follows. Catalyzes the condensation of pantoate with beta-alanine in an ATP-dependent reaction via a pantoyl-adenylate intermediate. The protein is Pantothenate synthetase of Methylobacillus flagellatus (strain ATCC 51484 / DSM 6875 / VKM B-1610 / KT).